Reading from the N-terminus, the 359-residue chain is Nicotinate-nucleotide--dimethylbenzimidazole phosphoribosyltransferase (359 aa).

Residue E318 is the Proton acceptor of the active site.

This sequence belongs to the CobT family. As to quaternary structure, homodimer.

The catalysed reaction is 5,6-dimethylbenzimidazole + nicotinate beta-D-ribonucleotide = alpha-ribazole 5'-phosphate + nicotinate + H(+). It functions in the pathway nucleoside biosynthesis; alpha-ribazole biosynthesis; alpha-ribazole from 5,6-dimethylbenzimidazole: step 1/2. Functionally, catalyzes the synthesis of alpha-ribazole-5'-phosphate from nicotinate mononucleotide (NAMN) and 5,6-dimethylbenzimidazole (DMB). The sequence is that of Nicotinate-nucleotide--dimethylbenzimidazole phosphoribosyltransferase from Escherichia coli O127:H6 (strain E2348/69 / EPEC).